The following is a 178-amino-acid chain: Thioredoxin F1, chloroplastic (178 aa).

Residues 1–22 form a disordered region; the sequence is MPLSLRLSPSPTALSPTTGGFG. The N-terminal 57 residues, 1–57, are a transit peptide targeting the chloroplast; it reads MPLSLRLSPSPTALSPTTGGFGPSRKQCRIPYSGVPTTKIGFCSLDSRKRGDSSVVR. A compositionally biased stretch (polar residues) spans 7 to 18; sequence LSPSPTALSPTT. In terms of domain architecture, Thioredoxin spans 58-174; that stretch reads CSLETVNVSV…LVAAIETARS (117 aa). Catalysis depends on nucleophile residues Cys99 and Cys102. A disulfide bridge connects residues Cys99 and Cys102. At Cys126 the chain carries S-glutathionyl cysteine; transient.

Belongs to the thioredoxin family. Plant F-type subfamily. Glutathionylation at Cys-126 decreases its ability to be reduced by ferredoxin-thioredoxin reductase and reduces its efficiency in activating target chloroplastic enzymes.

Its subcellular location is the plastid. The protein localises to the chloroplast stroma. Thiol-disulfide oxidoreductase involved in the redox regulation of enzymes of both reductive pentose phosphate pathway (Calvin-Benson cycle) and oxidative pentose phosphate pathway. Under light or reducing conditions, activates in chloroplast the glyceraldehyde-3-phosphate dehydrogenase, the phosphoribulokinase and the fructose-1,6-bisphosphate phosphatase, and inhibits the glucose-6-phosphate dehydrogenase. The chain is Thioredoxin F1, chloroplastic from Arabidopsis thaliana (Mouse-ear cress).